The chain runs to 201 residues: Cysteine dioxygenase type 1 (201 aa).

Fe cation is bound by residues H86, H88, and H141. Residues 93-158 (CFLKLLQGQL…TEPAVSLHLY (66 aa)) constitute a cross-link (3'-(S-cysteinyl)-tyrosine (Cys-Tyr)).

The protein belongs to the cysteine dioxygenase family. As to quaternary structure, monomer. Requires Fe cation as cofactor. The cofactor is Ni(2+). Zn(2+) is required as a cofactor. In terms of processing, the thioether cross-link between Cys-93 and Tyr-158 plays a structural role through stabilizing the Fe(2+) ion, and prevents the production of highly damaging free hydroxyl radicals by holding the oxygen radical via hydroxyl hydrogen.

It catalyses the reaction L-cysteine + O2 = 3-sulfino-L-alanine + H(+). It functions in the pathway organosulfur biosynthesis; taurine biosynthesis; hypotaurine from L-cysteine: step 1/2. Functionally, catalyzes the oxidation of cysteine to cysteine sulfinic acid with addition of molecular dioxygen. This chain is Cysteine dioxygenase type 1 (cdo1), found in Danio rerio (Zebrafish).